We begin with the raw amino-acid sequence, 132 residues long: uncharacterized protein (132 aa).

The segment at 107–132 (LNTFSGSGQKHSQPGSGQHPFSFRKD) is disordered. Positions 108 to 122 (NTFSGSGQKHSQPGS) are enriched in polar residues.

This is an uncharacterized protein from Bacillus subtilis (strain 168).